The sequence spans 617 residues: Dihydroxy-acid dehydratase (617 aa).

Aspartate 81 contacts Mg(2+). Cysteine 122 contributes to the [2Fe-2S] cluster binding site. Mg(2+)-binding residues include aspartate 123 and lysine 124. The residue at position 124 (lysine 124) is an N6-carboxylysine. Cysteine 195 serves as a coordination point for [2Fe-2S] cluster. Residue glutamate 492 participates in Mg(2+) binding. Residue serine 518 is the Proton acceptor of the active site.

The protein belongs to the IlvD/Edd family. In terms of assembly, homodimer. [2Fe-2S] cluster serves as cofactor. Mg(2+) is required as a cofactor.

The enzyme catalyses (2R)-2,3-dihydroxy-3-methylbutanoate = 3-methyl-2-oxobutanoate + H2O. The catalysed reaction is (2R,3R)-2,3-dihydroxy-3-methylpentanoate = (S)-3-methyl-2-oxopentanoate + H2O. It participates in amino-acid biosynthesis; L-isoleucine biosynthesis; L-isoleucine from 2-oxobutanoate: step 3/4. It functions in the pathway amino-acid biosynthesis; L-valine biosynthesis; L-valine from pyruvate: step 3/4. Functionally, functions in the biosynthesis of branched-chain amino acids. Catalyzes the dehydration of (2R,3R)-2,3-dihydroxy-3-methylpentanoate (2,3-dihydroxy-3-methylvalerate) into 2-oxo-3-methylpentanoate (2-oxo-3-methylvalerate) and of (2R)-2,3-dihydroxy-3-methylbutanoate (2,3-dihydroxyisovalerate) into 2-oxo-3-methylbutanoate (2-oxoisovalerate), the penultimate precursor to L-isoleucine and L-valine, respectively. The polypeptide is Dihydroxy-acid dehydratase (Xanthobacter autotrophicus (strain ATCC BAA-1158 / Py2)).